Consider the following 394-residue polypeptide: Elongation factor Tu (394 aa).

In terms of domain architecture, tr-type G spans 10–204 (KPHVNVGTIG…AVDEWIPTPE (195 aa)). Residues 19–26 (GHIDHGKT) are G1. 19 to 26 (GHIDHGKT) lines the GTP pocket. Residue Thr-26 participates in Mg(2+) binding. The segment at 60–64 (GITIN) is G2. The segment at 81 to 84 (DCPG) is G3. GTP is bound by residues 81–85 (DCPGH) and 136–139 (NKCD). The segment at 136-139 (NKCD) is G4. The interval 174–176 (SAL) is G5.

Belongs to the TRAFAC class translation factor GTPase superfamily. Classic translation factor GTPase family. EF-Tu/EF-1A subfamily. Monomer.

It localises to the cytoplasm. The catalysed reaction is GTP + H2O = GDP + phosphate + H(+). In terms of biological role, GTP hydrolase that promotes the GTP-dependent binding of aminoacyl-tRNA to the A-site of ribosomes during protein biosynthesis. The protein is Elongation factor Tu of Mycoplasma pneumoniae (strain ATCC 29342 / M129 / Subtype 1) (Mycoplasmoides pneumoniae).